The primary structure comprises 75 residues: Molt-inhibiting hormone (75 aa).

3 disulfide bridges follow: C7/C44, C24/C40, and C27/C53. A75 carries the alanine amide modification.

The protein belongs to the arthropod CHH/MIH/GIH/VIH hormone family.

The protein localises to the secreted. Functionally, inhibits Y-organs where molting hormone (ecdysteroid) is secreted. A molting cycle is initiated when MIH secretion diminishes or stops. This is Molt-inhibiting hormone from Procambarus clarkii (Red swamp crayfish).